A 222-amino-acid polypeptide reads, in one-letter code: Interleukin-12 subunit alpha (222 aa).

An N-terminal signal peptide occupies residues 1–25 (MCPPRGLLLVTILVLLNHLDHLSLA). 3 disulfide bridges follow: cysteine 40–cysteine 113, cysteine 67–cysteine 199, and cysteine 88–cysteine 126. 4 N-linked (GlcNAc...) asparagine glycosylation sites follow: asparagine 42, asparagine 96, asparagine 110, and asparagine 183.

The protein belongs to the IL-6 superfamily. As to quaternary structure, heterodimer with IL12B; disulfide-linked. This heterodimer is known as interleukin IL-12. Heterodimer with EBI3/IL27B; not disulfide-linked. This heterodimer is known as interleukin IL-35. Interacts with NBR1; this interaction promotes IL-12 secretion.

The protein localises to the secreted. Its function is as follows. Heterodimerizes with IL12B to form the IL-12 cytokine or with EBI3/IL27B to form the IL-35 cytokine. IL-12 is primarily produced by professional antigen-presenting cells (APCs) such as B-cells and dendritic cells (DCs) as well as macrophages and granulocytes and regulates T-cell and natural killer-cell responses, induces the production of interferon-gamma (IFN-gamma), favors the differentiation of T-helper 1 (Th1) cells and is an important link between innate resistance and adaptive immunity. Mechanistically, exerts its biological effects through a receptor composed of IL12R1 and IL12R2 subunits. Binding to the receptor results in the rapid tyrosine phosphorylation of a number of cellular substrates including the JAK family kinases TYK2 and JAK2. In turn, recruited STAT4 gets phosphorylated and translocates to the nucleus where it regulates cytokine/growth factor responsive genes. As part of IL-35, plays essential roles in maintaining the immune homeostasis of the liver microenvironment and also functions as an immune-suppressive cytokine. Mediates biological events through unconventional receptors composed of IL12RB2 and gp130/IL6ST heterodimers or homodimers. Signaling requires the transcription factors STAT1 and STAT4, which form a unique heterodimer that binds to distinct DNA sites. This chain is Interleukin-12 subunit alpha (IL12A), found in Felis catus (Cat).